A 408-amino-acid chain; its full sequence is Arginine biosynthesis bifunctional protein ArgJ 1 (408 aa).

6 residues coordinate substrate: threonine 154, lysine 180, threonine 191, glutamate 277, asparagine 403, and serine 408. Threonine 191 functions as the Nucleophile in the catalytic mechanism.

It belongs to the ArgJ family. In terms of assembly, heterotetramer of two alpha and two beta chains.

The protein resides in the cytoplasm. It carries out the reaction N(2)-acetyl-L-ornithine + L-glutamate = N-acetyl-L-glutamate + L-ornithine. The catalysed reaction is L-glutamate + acetyl-CoA = N-acetyl-L-glutamate + CoA + H(+). It functions in the pathway amino-acid biosynthesis; L-arginine biosynthesis; L-ornithine and N-acetyl-L-glutamate from L-glutamate and N(2)-acetyl-L-ornithine (cyclic): step 1/1. Its pathway is amino-acid biosynthesis; L-arginine biosynthesis; N(2)-acetyl-L-ornithine from L-glutamate: step 1/4. In terms of biological role, catalyzes two activities which are involved in the cyclic version of arginine biosynthesis: the synthesis of N-acetylglutamate from glutamate and acetyl-CoA as the acetyl donor, and of ornithine by transacetylation between N(2)-acetylornithine and glutamate. This Clostridium acetobutylicum (strain ATCC 824 / DSM 792 / JCM 1419 / IAM 19013 / LMG 5710 / NBRC 13948 / NRRL B-527 / VKM B-1787 / 2291 / W) protein is Arginine biosynthesis bifunctional protein ArgJ 1.